A 423-amino-acid polypeptide reads, in one-letter code: Probable WRKY transcription factor 58 (423 aa).

Disordered regions lie at residues 91 to 128 (SSAH…AVHG), 142 to 171 (RNHY…DGYN), and 215 to 284 (IYKG…GVST). Low complexity-rich tracts occupy residues 99 to 111 (QPRQ…PQRP) and 144 to 162 (HYNN…VVNV). Positions 161–225 (NVDKPADDGY…YKGQHDHERP (65 aa)) form a DNA-binding region, WRKY 1. Residues 259 to 271 (DDDDDDDEDDEDL) are compositionally biased toward acidic residues. Residues 300-365 (SEVDLLDDGY…YEGKHNHDVP (66 aa)) constitute a DNA-binding region (WRKY 2).

It localises to the nucleus. Transcription factor. Interacts specifically with the W box (5'-(T)TGAC[CT]-3'), a frequently occurring elicitor-responsive cis-acting element. This is Probable WRKY transcription factor 58 (WRKY58) from Arabidopsis thaliana (Mouse-ear cress).